Here is a 266-residue protein sequence, read N- to C-terminus: Indole-3-glycerol phosphate synthase (266 aa).

The protein belongs to the TrpC family.

The enzyme catalyses 1-(2-carboxyphenylamino)-1-deoxy-D-ribulose 5-phosphate + H(+) = (1S,2R)-1-C-(indol-3-yl)glycerol 3-phosphate + CO2 + H2O. The protein operates within amino-acid biosynthesis; L-tryptophan biosynthesis; L-tryptophan from chorismate: step 4/5. In Variovorax paradoxus (strain S110), this protein is Indole-3-glycerol phosphate synthase.